We begin with the raw amino-acid sequence, 467 residues long: Tyrosine phenol-lyase (467 aa).

Lys-268 bears the N6-(pyridoxal phosphate)lysine mark.

This sequence belongs to the beta-eliminating lyase family. As to quaternary structure, homotetramer. It depends on pyridoxal 5'-phosphate as a cofactor.

The catalysed reaction is L-tyrosine + H2O = phenol + pyruvate + NH4(+). This chain is Tyrosine phenol-lyase, found in Nostoc punctiforme (strain ATCC 29133 / PCC 73102).